Reading from the N-terminus, the 212-residue chain is Proteasome subunit beta 2 (212 aa).

The propeptide at 1 to 15 (MLHHPGTGQLRALKG) is removed in mature form; by autocatalysis. T16 (nucleophile) is an active-site residue.

Belongs to the peptidase T1B family. In terms of assembly, the 20S proteasome core is composed of 14 alpha and 14 beta subunits that assemble into four stacked heptameric rings, resulting in a barrel-shaped structure. The two inner rings, each composed of seven catalytic beta subunits, are sandwiched by two outer rings, each composed of seven alpha subunits. The catalytic chamber with the active sites is on the inside of the barrel. Has a gated structure, the ends of the cylinder being occluded by the N-termini of the alpha-subunits. Is capped at one or both ends by the proteasome regulatory ATPase, PAN.

It is found in the cytoplasm. It catalyses the reaction Cleavage of peptide bonds with very broad specificity.. With respect to regulation, the formation of the proteasomal ATPase PAN-20S proteasome complex, via the docking of the C-termini of PAN into the intersubunit pockets in the alpha-rings, triggers opening of the gate for substrate entry. Interconversion between the open-gate and close-gate conformations leads to a dynamic regulation of the 20S proteasome proteolysis activity. Functionally, component of the proteasome core, a large protease complex with broad specificity involved in protein degradation. The chain is Proteasome subunit beta 2 from Hyperthermus butylicus (strain DSM 5456 / JCM 9403 / PLM1-5).